We begin with the raw amino-acid sequence, 280 residues long: MIQHAGLGYRRDLAEDFLSLSENSPICFIEAAPENWLKMGGWARKQFDRVAERLPLALHGLSMSLGGQAPLDTDLIDGIKEMMRRYDCTFFSDHLSYCHDGGHLYDLLPLPFTEEMVHHTARRIREVQDRLGCRIAVENTSYYLHSPLAEMNEVEFLNAVAREADCGIHLDVNNIYVNAVNHGLLSPEAFLKNVDADRVCYIHIAGHDVETPELLIDTHGAAVLPTVWDLLELAYAKLPTIPPTLLERDFNFPPFAELEAEVAKIADYQTRAGKEYRRAA.

Belongs to the UPF0276 family.

The polypeptide is UPF0276 protein NMA0228 (Neisseria meningitidis serogroup A / serotype 4A (strain DSM 15465 / Z2491)).